A 120-amino-acid chain; its full sequence is Large ribosomal subunit protein bL20 (120 aa).

It belongs to the bacterial ribosomal protein bL20 family.

Binds directly to 23S ribosomal RNA and is necessary for the in vitro assembly process of the 50S ribosomal subunit. It is not involved in the protein synthesizing functions of that subunit. The chain is Large ribosomal subunit protein bL20 from Methylobacillus flagellatus (strain ATCC 51484 / DSM 6875 / VKM B-1610 / KT).